The following is a 213-amino-acid chain: MFHVKQPLINCQIIRTLLPAGSGVSRETGEKLALYESLLTRWTRTVNLVSRNDVEHIRDRHILDSLQLLPLLEPLPGPLIDIGSGGGLPGLVLAIATGRETHLVEADQRKAAFLREAARATESNVTVHACRIEQCNIAPAPVLTARALAPLNVLLGYALRLLSKNGVALFMKGKTAEQELTEAATEWHMRVQLSPSRTHPEASILRIDEISRV.

S-adenosyl-L-methionine-binding positions include glycine 83, leucine 88, 132–133 (IE), and arginine 146.

It belongs to the methyltransferase superfamily. RNA methyltransferase RsmG family.

The protein resides in the cytoplasm. The catalysed reaction is guanosine(527) in 16S rRNA + S-adenosyl-L-methionine = N(7)-methylguanosine(527) in 16S rRNA + S-adenosyl-L-homocysteine. Its function is as follows. Specifically methylates the N7 position of guanine in position 527 of 16S rRNA. In Granulibacter bethesdensis (strain ATCC BAA-1260 / CGDNIH1), this protein is Ribosomal RNA small subunit methyltransferase G.